Reading from the N-terminus, the 916-residue chain is Nitrate reductase [NADH] 1 (916 aa).

Residues 1–77 (MAASVQPRQF…DDEEEEQEDW (77 aa)) form a disordered region. Over residues 66–76 (GSDDEEEEQED) the composition is skewed to acidic residues. Residue Cys-192 participates in Mo-molybdopterin binding. The Cytochrome b5 heme-binding domain occupies 541–616 (GKQFTMSEVR…LDTYRIGELI (76 aa)). Residues His-576 and His-599 each coordinate heme. The 113-residue stretch at 656-768 (RDKVPCQLVD…KGPLGHVEYT (113 aa)) folds into the FAD-binding FR-type domain. FAD is bound by residues 708–711 (RAYT), 725–729 (LIKVY), Phe-730, Phe-737, 742–744 (LMT), Ser-792, and Thr-795.

This sequence belongs to the nitrate reductase family. As to quaternary structure, homodimer. FAD serves as cofactor. The cofactor is heme. It depends on Mo-molybdopterin as a cofactor.

The catalysed reaction is nitrite + NAD(+) + H2O = nitrate + NADH + H(+). Its function is as follows. Nitrate reductase is a key enzyme involved in the first step of nitrate assimilation in plants, fungi and bacteria. This Oryza sativa subsp. japonica (Rice) protein is Nitrate reductase [NADH] 1 (NIA1).